Here is a 262-residue protein sequence, read N- to C-terminus: Adenosine deaminase RL5 (262 aa).

Positions 36, 40, 68, 73, 75, 114, 118, 135, 172, 175, 234, and 237 each coordinate Cu cation.

This sequence belongs to the purine nucleoside phosphorylase YfiH/LACC1 family. As to quaternary structure, homodimer. Cu cation is required as a cofactor.

It carries out the reaction adenosine + phosphate = alpha-D-ribose 1-phosphate + adenine. It catalyses the reaction S-methyl-5'-thioadenosine + phosphate = 5-(methylsulfanyl)-alpha-D-ribose 1-phosphate + adenine. The enzyme catalyses inosine + phosphate = alpha-D-ribose 1-phosphate + hypoxanthine. The catalysed reaction is adenosine + H2O + H(+) = inosine + NH4(+). Purine nucleoside enzyme that catalyzes the phosphorolysis of adenosine and inosine nucleosides, yielding D-ribose 1-phosphate and the respective free bases, adenine and hypoxanthine. Also catalyzes the phosphorolysis of S-methyl-5'-thioadenosine into adenine and S-methyl-5-thio-alpha-D-ribose 1-phosphate. Also has adenosine deaminase activity. Also acts as a multicopper oxidase able to oxidize a wide variety of polyphenols and related compounds in vitro. Displays substrate preference as follows: syringaldazine &gt; 2,6-dimethoxyphenol &gt; veratryl alcohol &gt; guaiacol &gt; tetramethylbenzidine &gt; 4-methoxybenzyl alcohol &gt; 2,2'-azino-bis(3-ethylbenzthiazoline-6-sulfonic acid) (ABTS) &gt;&gt; phenol red &gt; 1-hydroxybenzotriazole. Cannot use 3,4-dimetoxybenzyl alcohol and violuric acid as substrates. As this enzyme is derived from a rumen microbial community, it may have a role in the digestion of complex plant materials such as ryegrass lignin. This chain is Adenosine deaminase RL5, found in Unknown prokaryotic organism.